The chain runs to 64 residues: Temporin-ALd (64 aa).

The N-terminal stretch at 1–22 (MFTMKKSLLLLFFLGTIHLSLC) is a signal peptide. A propeptide spanning residues 23–46 (EQERNAEEERRDDLGERQAEVEKR) is cleaved from the precursor. Leucine 62 is subject to Leucine amide.

In terms of tissue distribution, expressed by the skin glands.

Its subcellular location is the secreted. Antimicrobial peptide with activity against Gram-positive and Gram-negative bacteria and against fungi. Has been tested against S.aureus (MIC=1.25 ug/mL), B.pumilus (MIC=2.5 ug/mL), B.cereus (MIC=15.0 ug/mL), E.coli (MIC=1.25 ug/mL), B.dysenteriae (MIC=5.0 ug/mL), A.cacoaceticus (MIC=15.0 ug/mL), P.aeruginosa (MIC=5.0 ug/mL) and C.albicans (MIC=1.25 ug/mL). Also shows a weak hemolytic activity. In Amolops loloensis (Lolokou Sucker Frog), this protein is Temporin-ALd.